Consider the following 500-residue polypeptide: Aldehyde dehydrogenase, mitochondrial (500 aa).

An N6-acetyllysine mark is found at K35, K56, and K142. NAD(+) is bound at residue 245 to 250; sequence GSTEVG. Residue E268 is the Proton acceptor of the active site. C302 functions as the Nucleophile in the catalytic mechanism. Residues K358, K366, K409, K411, K424, and K434 each carry the N6-acetyllysine modification.

Belongs to the aldehyde dehydrogenase family. In terms of assembly, homotetramer. In terms of processing, in response to mitochondrial stress, the precursor protein is ubiquitinated by the SIFI complex in the cytoplasm before mitochondrial import, leading to its degradation. Within the SIFI complex, UBR4 initiates ubiquitin chain that are further elongated or branched by KCMF1.

It localises to the mitochondrion matrix. The catalysed reaction is an aldehyde + NAD(+) + H2O = a carboxylate + NADH + 2 H(+). The protein operates within alcohol metabolism; ethanol degradation; acetate from ethanol: step 2/2. Its function is as follows. Required for clearance of cellular formaldehyde, a cytotoxic and carcinogenic metabolite that induces DNA damage. The chain is Aldehyde dehydrogenase, mitochondrial (ALDH2) from Equus caballus (Horse).